The chain runs to 111 residues: Nucleoid-associated protein NGK_1136 (111 aa).

It belongs to the YbaB/EbfC family. In terms of assembly, homodimer.

The protein localises to the cytoplasm. Its subcellular location is the nucleoid. Binds to DNA and alters its conformation. May be involved in regulation of gene expression, nucleoid organization and DNA protection. This is Nucleoid-associated protein NGK_1136 from Neisseria gonorrhoeae (strain NCCP11945).